A 377-amino-acid polypeptide reads, in one-letter code: Succinyl-diaminopimelate desuccinylase (377 aa).

His66 is a binding site for Zn(2+). The active site involves Asp68. Asp99 is a Zn(2+) binding site. Catalysis depends on Glu133, which acts as the Proton acceptor. Zn(2+) contacts are provided by Glu134, Glu162, and His348.

It belongs to the peptidase M20A family. DapE subfamily. Homodimer. Zn(2+) is required as a cofactor. The cofactor is Co(2+).

The enzyme catalyses N-succinyl-(2S,6S)-2,6-diaminopimelate + H2O = (2S,6S)-2,6-diaminopimelate + succinate. It participates in amino-acid biosynthesis; L-lysine biosynthesis via DAP pathway; LL-2,6-diaminopimelate from (S)-tetrahydrodipicolinate (succinylase route): step 3/3. Its function is as follows. Catalyzes the hydrolysis of N-succinyl-L,L-diaminopimelic acid (SDAP), forming succinate and LL-2,6-diaminopimelate (DAP), an intermediate involved in the bacterial biosynthesis of lysine and meso-diaminopimelic acid, an essential component of bacterial cell walls. The protein is Succinyl-diaminopimelate desuccinylase of Xylella fastidiosa (strain M23).